The following is a 617-amino-acid chain: Type IV inositol polyphosphate 5-phosphatase 6 (617 aa).

2 disordered regions span residues 30 to 62 (EFQA…KNTK) and 241 to 330 (DFDP…VLYS). The segment covering 242–253 (FDPSFRGSSSSH) has biased composition (low complexity). Residues 254–290 (RPSDYSRRPSDYSRRPSDYSRRPSDYSRRPSDSRPSD) show a composition bias toward basic and acidic residues. Positions 291–311 (YSRPSDYYSRPSDYSRPSDFS) are enriched in low complexity. Catalytic stretches follow at residues 458 to 473 (DRVI…IALS) and 538 to 553 (KRRT…WFGE).

The protein belongs to the inositol polyphosphate 5-phosphatase family. As to expression, broadly expressed in emerging organs. Mostly localized in procambium of growing organs. Restricted to vascular differentiating cells of young organs.

The enzyme catalyses a 1,2-diacyl-sn-glycero-3-phospho-(1D-myo-inositol-4,5-bisphosphate) + H2O = a 1,2-diacyl-sn-glycero-3-phospho-(1D-myo-inositol 4-phosphate) + phosphate. It carries out the reaction a 1,2-diacyl-sn-glycero-3-phospho-(1D-myo-inositol-3,4,5-trisphosphate) + H2O = a 1,2-diacyl-sn-glycero-3-phospho-(1D-myo-inositol-3,4-bisphosphate) + phosphate. Has phosphatase activity toward PtdIns(4,5)P2 and PtdIns(3,4,5)P3. Required for the patterning of procambium and during the differentiation of vascular tissues. Acts before the acquisition of preprocambial identity. Seems to be also involved in the abscisic acid (ABA) signaling pathway. Acts redundantly with CVL1 for maintaining vascular continuity. Regulates phosphoinositide-dependent VAN3 localization. This is Type IV inositol polyphosphate 5-phosphatase 6 from Arabidopsis thaliana (Mouse-ear cress).